Reading from the N-terminus, the 729-residue chain is Fatty acid oxidation complex subunit alpha (729 aa).

The interval 1–189 is enoyl-CoA hydratase/isomerase; that stretch reads MLYKGDTLYV…KIGLIDGIVK (189 aa). Asp296 provides a ligand contact to substrate. A 3-hydroxyacyl-CoA dehydrogenase region spans residues 311 to 729; the sequence is EMPKQAAVLG…ARPVGALKTA (419 aa). Residues Met324, Asp343, 400–402, Lys407, and Ser429 contribute to the NAD(+) site; that span reads VVE. The For 3-hydroxyacyl-CoA dehydrogenase activity role is filled by His450. Asn453 contributes to the NAD(+) binding site. Positions 500 and 660 each coordinate substrate. The segment at 708 to 729 is disordered; sequence RHNEPYYPPVEPARPVGALKTA.

The protein in the N-terminal section; belongs to the enoyl-CoA hydratase/isomerase family. It in the C-terminal section; belongs to the 3-hydroxyacyl-CoA dehydrogenase family. As to quaternary structure, heterotetramer of two alpha chains (FadB) and two beta chains (FadA).

The enzyme catalyses a (3S)-3-hydroxyacyl-CoA + NAD(+) = a 3-oxoacyl-CoA + NADH + H(+). It catalyses the reaction a (3S)-3-hydroxyacyl-CoA = a (2E)-enoyl-CoA + H2O. It carries out the reaction a 4-saturated-(3S)-3-hydroxyacyl-CoA = a (3E)-enoyl-CoA + H2O. The catalysed reaction is (3S)-3-hydroxybutanoyl-CoA = (3R)-3-hydroxybutanoyl-CoA. The enzyme catalyses a (3Z)-enoyl-CoA = a 4-saturated (2E)-enoyl-CoA. It catalyses the reaction a (3E)-enoyl-CoA = a 4-saturated (2E)-enoyl-CoA. It participates in lipid metabolism; fatty acid beta-oxidation. Its function is as follows. Involved in the aerobic and anaerobic degradation of long-chain fatty acids via beta-oxidation cycle. Catalyzes the formation of 3-oxoacyl-CoA from enoyl-CoA via L-3-hydroxyacyl-CoA. It can also use D-3-hydroxyacyl-CoA and cis-3-enoyl-CoA as substrate. The polypeptide is Fatty acid oxidation complex subunit alpha (Enterobacter sp. (strain 638)).